The primary structure comprises 144 residues: Large ribosomal subunit protein uL15 (144 aa).

The tract at residues 1–59 is disordered; sequence MELNNLKPAEGAKHAKRRVGRGIGSGLGKTAGRGHKGQKSRSGGFHKVGFEGGQMPLQR. Gly residues predominate over residues 21–31; that stretch reads RGIGSGLGKTA.

The protein belongs to the universal ribosomal protein uL15 family. Part of the 50S ribosomal subunit.

Binds to the 23S rRNA. The chain is Large ribosomal subunit protein uL15 from Burkholderia thailandensis (strain ATCC 700388 / DSM 13276 / CCUG 48851 / CIP 106301 / E264).